Here is a 211-residue protein sequence, read N- to C-terminus: Formate dehydrogenase, cytochrome b556(fdo) subunit (211 aa).

Topologically, residues 1–17 are cytoplasmic; it reads MKRRDTIVRYTAPERIN. Heme b is bound at residue His18. The chain crosses the membrane as a helical span at residues 18–32; that stretch reads HWITAFCFILAAVSG. At 33 to 53 the chain is on the periplasmic side; sequence LGFLFPSFNWLMQIMGTPQLA. The chain crosses the membrane as a helical span at residues 54–72; sequence RILHPFVGVVMFASFIIMF. His57 contributes to the heme b binding site. Residues 73–112 lie on the Cytoplasmic side of the membrane; the sequence is FRYWHHNLINRDDIFWAKNIRKIVVNEEVGDTGRYNFGQK. Residues 113–130 form a helical membrane-spanning segment; sequence CVFWAAIIFLVLLLVSGV. The Periplasmic portion of the chain corresponds to 131–151; that stretch reads IIWRPYFAPAFSIPVIRFALM. A helical membrane pass occupies residues 152–170; sequence LHSFAAVALIVVIMVHIYA. The heme b site is built by His153 and His167. Over 171–211 the chain is Cytoplasmic; that stretch reads ALWVKGTITAMVEGWVTSAWAKKHHPRWYREVRKTTEKKAE.

It belongs to the formate dehydrogenase gamma subunit family. In terms of assembly, formate dehydrogenase is a membrane-bound complex, formed by subunits alpha, beta and gamma. Heme serves as cofactor.

It is found in the cell inner membrane. Allows to use formate as major electron donor during aerobic respiration. Subunit gamma is probably the cytochrome b556(FDO) component of the formate dehydrogenase. This chain is Formate dehydrogenase, cytochrome b556(fdo) subunit (fdoI), found in Escherichia coli O157:H7.